Consider the following 586-residue polypeptide: Ezrin (586 aa).

In terms of domain architecture, FERM spans 2–295; sequence PKPINVRVTT…GNHELYMRRR (294 aa). The residue at position 60 (Lys60) is an N6-acetyllysine. Positions 115–120 match the [IL]-x-C-x-x-[DE] motif motif; it reads IYCPPE. Residue Tyr146 is modified to Phosphotyrosine; by PDGFR. Positions 244–586 are interaction with SCYL3; it reads EIRNISFNDK…KQRIDEFEAM (343 aa). Residues 302-462 adopt a coiled-coil conformation; it reads VQQMKAQARE…QDDLVKTKEE (161 aa). The disordered stretch occupies residues 306 to 338; it reads KAQAREEKHQKQLERQQLETEKKRRETVEREKE. A compositionally biased stretch (basic and acidic residues) spans 308–338; sequence QAREEKHQKQLERQQLETEKKRRETVEREKE. Residue Tyr354 is modified to Phosphotyrosine; by PDGFR. The residue at position 366 (Ser366) is a Phosphoserine. Phosphotyrosine is present on Tyr478. A disordered region spans residues 534–565; it reads LSNELSQARDENKRTHNDIIHNENMRQGRDKY. Position 535 is a phosphoserine (Ser535). Residues 540-565 show a composition bias toward basic and acidic residues; that stretch reads QARDENKRTHNDIIHNENMRQGRDKY. Thr567 carries the post-translational modification Phosphothreonine; by ROCK2 and PKC/PRKCI.

In terms of assembly, interacts with PALS1 and NHERF2. Found in a complex with EZR, PODXL and NHERF2. Interacts with MCC, PLEKHG6, PODXL, SCYL3/PACE1, NHERF1 and TMEM8B. Interacts (when phosphorylated) with FES/FPS. Interacts with dimeric S100P, the interaction may be activating through unmasking of F-actin binding sites. Identified in complexes that contain VIM, EZR, AHNAK, BFSP1, BFSP2, ANK2, PLEC, PRX and spectrin. Detected in a complex composed of at least EZR, AHNAK, PPL and PRX. Interacts with PDPN (via cytoplasmic domain); activates RHOA and promotes epithelial-mesenchymal transition. Interacts with SPN/CD43 cytoplasmic tail. Interacts with CD44 and ICAM2. Interacts with SLC9A3; interaction targets SLC9A3 to the apical membrane. Interacts with SLC9A1; regulates interactions of SLC9A1 with cytoskeletal and promotes stress fiber formation. Interacts with CLIC5; may work together in a complex which also includes RDX and MYO6 to stabilize linkages between the plasma membrane and subjacent actin cytoskeleton at the base of stereocilia. Post-translationally, phosphorylated by tyrosine-protein kinases. Phosphorylation by ROCK2 suppresses the head-to-tail association of the N-terminal and C-terminal halves resulting in an opened conformation which is capable of actin and membrane-binding. In terms of processing, S-nitrosylation is induced by interferon-gamma and oxidatively-modified low-densitity lipoprotein (LDL(ox)) possibly implicating the iNOS-S100A8/9 transnitrosylase complex. As to expression, detected in eye lens fiber cells. Expressed in cerebrum and cerebellum (at protein level). Component of the microvilli of intestinal epithelial cells.

It is found in the apical cell membrane. Its subcellular location is the cell projection. The protein localises to the microvillus membrane. The protein resides in the ruffle membrane. It localises to the cytoplasm. It is found in the cell cortex. Its subcellular location is the cytoskeleton. The protein localises to the microvillus. Its activity is regulated as follows. A head-to-tail association, of the N-terminal and C-terminal halves results in a closed conformation (inactive form) which is incapable of actin or membrane-binding. Its function is as follows. Probably involved in connections of major cytoskeletal structures to the plasma membrane. In epithelial cells, required for the formation of microvilli and membrane ruffles on the apical pole. Along with PLEKHG6, required for normal macropinocytosis. In Mus musculus (Mouse), this protein is Ezrin (Ezr).